A 521-amino-acid chain; its full sequence is Ribonuclease Y 1 (521 aa).

A helical membrane pass occupies residues 1–21 (MEIVISAIIGLLIGGTVVFVI). A disordered region spans residues 51–87 (IKKESENKAKDFESRARKNVEQDIHKQKSTLKNKESQ). One can recognise a KH domain in the interval 211 to 271 (TVSVLALPND…VRRELARRTI (61 aa)). One can recognise an HD domain in the interval 337–430 (ALNQSLEVAT…VHAAYTLSSS (94 aa)).

The protein belongs to the RNase Y family.

Its subcellular location is the cell membrane. In terms of biological role, endoribonuclease that initiates mRNA decay. The chain is Ribonuclease Y 1 from Bdellovibrio bacteriovorus (strain ATCC 15356 / DSM 50701 / NCIMB 9529 / HD100).